Consider the following 155-residue polypeptide: Small ribosomal subunit protein uS10m (155 aa).

It belongs to the universal ribosomal protein uS10 family. In terms of assembly, component of the mitochondrial ribosome small subunit (28S) which comprises a 12S rRNA and about 30 distinct proteins.

It is found in the mitochondrion. The protein is Small ribosomal subunit protein uS10m (Mrps10) of Rattus norvegicus (Rat).